The primary structure comprises 239 residues: Tumor protein p53-inducible nuclear protein 1 (239 aa).

Positions 25-37 match the LIR motif; it reads EKEDDEWILVDFI.

In terms of assembly, interacts with p53/TP53 and HIPK2. Interacts with PRKCG, GABARAP, GABARAPL1, GABARAPL2, MAP1LC3A, MAP1LC3B and MAP1LC3C. As to expression, specifically expressed by acinar cells of chronic pancreatitis tissue.

Its subcellular location is the cytoplasm. It localises to the cytosol. It is found in the nucleus. The protein localises to the PML body. The protein resides in the cytoplasmic vesicle. Its subcellular location is the autophagosome. Its function is as follows. Antiproliferative and proapoptotic protein involved in cell stress response which acts as a dual regulator of transcription and autophagy. Acts as a positive regulator of autophagy. In response to cellular stress or activation of autophagy, relocates to autophagosomes where it interacts with autophagosome-associated proteins GABARAP, GABARAPL1/L2, MAP1LC3A/B/C and regulates autophagy. Acts as an antioxidant and plays a major role in p53/TP53-driven oxidative stress response. Possesses both a p53/TP53-independent intracellular reactive oxygen species (ROS) regulatory function and a p53/TP53-dependent transcription regulatory function. Positively regulates p53/TP53 and p73/TP73 and stimulates their capacity to induce apoptosis and regulate cell cycle. In response to double-strand DNA breaks, promotes p53/TP53 phosphorylation on 'Ser-46' and subsequent apoptosis. Acts as a tumor suppressor by inducing cell death by an autophagy and caspase-dependent mechanism. Can reduce cell migration by regulating the expression of SPARC. The sequence is that of Tumor protein p53-inducible nuclear protein 1 (Trp53inp1) from Rattus norvegicus (Rat).